Here is a 142-residue protein sequence, read N- to C-terminus: Large ribosomal subunit protein bL17 (142 aa).

Belongs to the bacterial ribosomal protein bL17 family. As to quaternary structure, part of the 50S ribosomal subunit. Contacts protein L32.

The protein is Large ribosomal subunit protein bL17 of Brucella canis (strain ATCC 23365 / NCTC 10854 / RM-666).